The sequence spans 225 residues: Cytidylate kinase (225 aa).

11 to 19 contacts ATP; sequence GPAAAGKST.

This sequence belongs to the cytidylate kinase family. Type 1 subfamily.

It localises to the cytoplasm. The catalysed reaction is CMP + ATP = CDP + ADP. It carries out the reaction dCMP + ATP = dCDP + ADP. The chain is Cytidylate kinase from Anoxybacillus flavithermus (strain DSM 21510 / WK1).